Here is a 353-residue protein sequence, read N- to C-terminus: O-antigen biosynthesis glycosyltransferase WclY (353 aa).

Residues 116-136 (SLIGGLLWCSIWLFFDKLVIL) form a helical membrane-spanning segment. Positions 190 and 271 each coordinate UDP. An E(x7)E motif is present at residues 263–271 (EGFGLTVLE).

This sequence belongs to the glycosyltransferase group 1 family. Glycosyltransferase 4 subfamily.

The protein localises to the membrane. The protein operates within bacterial outer membrane biogenesis; LPS O-antigen biosynthesis. Activated by 5mM MnCl(2) and MgCl(2). No significant effect on activity by 5 mM ethylenediaminetetraacetic acid (EDTA), 0.125-0.5% Triton X-100 or dithiothreitol (DTT). Inhibited by 5 mM Zn-acetate. Involved in the assembly of the O-repeating unit during O-antigen biosynthesis. Glucosyltransferase accountable for the alpha-D-Glc-1,4-beta-D-Gal linkage within the O-antigen. Transfers alpha-1,4-Glc to the Gal moiety of a specific Gal-beta1-3GalNAc-alpha-OPO3-PO3-phenoxyundecyl (Gal-beta1-3GalNAc-PP-PhU) synthetic natural acceptor substrate analog. Requires both Gal-beta1-3GalNAc-alpha and the diphosphate moiety in the acceptor. Not active with GalNAc-PP-PhU, GlcNAc-PP-PhU, Gal-beta1-3GalNAc-alpha-O-benzyl, D-Rha-alpha1-3GlcNAc-alpha-PP-PhU or D-Man-alpha1-3Man-alpha-5-benzamidopentyl (BAP), nor with glycopeptides TTTVTP (Gal-beta1-3GalNAc-alpha-)TPTG or TT (Gal-beta1-3GalNAc-alpha-)TVTPTPTG as acceptor substrates. Has a broad nucleotide sugar donor substrate specificity with ADP-Glc, TDP-Glc and UDP-Glc as superior donors. Gal, GlcNAc, and GalNAc residues are transferred from UDP-sugars, but with low activity. UDP-Xyl, UDP-GlcA, GDP-Fuc or GDP-K-Rha do not act as donors. The sequence is that of O-antigen biosynthesis glycosyltransferase WclY from Escherichia coli.